The following is an 87-amino-acid chain: Mitotic-spindle organizing protein 1 (87 aa).

Belongs to the MOZART1 family. As to quaternary structure, part of the gamma-tubulin complex.

The protein localises to the cytoplasm. The protein resides in the cytoskeleton. Its subcellular location is the microtubule organizing center. It is found in the spindle pole body. In terms of biological role, required for gamma-tubulin complex recruitment to the microtubule organizing center (MTOC). In Chaetomium globosum (strain ATCC 6205 / CBS 148.51 / DSM 1962 / NBRC 6347 / NRRL 1970) (Soil fungus), this protein is Mitotic-spindle organizing protein 1.